The following is a 335-amino-acid chain: Solute-binding protein Veis_3954 (335 aa).

The first 34 residues, Met1–Ala34, serve as a signal peptide directing secretion. (R)-pantoate is bound by residues Gln50, Glu82, Asn155–Arg158, Arg179, and Asn219.

The protein belongs to the bacterial solute-binding protein 7 family. In terms of assembly, the complex is comprised of an extracytoplasmic solute-binding protein and a heteromeric permease formed by two transmembrane proteins.

Its subcellular location is the periplasm. In terms of biological role, solute-binding protein that binds (R)-pantoate and D-erythronate (in vitro). Probably part of a tripartite ATP-independent periplasmic (TRAP) transport system that mediates solute transport into the cytoplasm. The sequence is that of Solute-binding protein Veis_3954 from Verminephrobacter eiseniae (strain EF01-2).